Consider the following 313-residue polypeptide: Jacalin-related lectin 8 (313 aa).

A signal peptide spans 1–23 (MFIIYLFIFLSSAIIDSNGVAMA). 2 consecutive Jacalin-type lectin domains span residues 24-163 (QKIE…YVKT) and 165-309 (PTKS…YFSP).

It belongs to the jacalin lectin family.

This chain is Jacalin-related lectin 8 (JAL8), found in Arabidopsis thaliana (Mouse-ear cress).